Here is a 228-residue protein sequence, read N- to C-terminus: Cytochrome c oxidase subunit 2 (228 aa).

Topologically, residues 1–26 are mitochondrial intermembrane; sequence MTTWANMNLQDSASPIMEQLIYFHDH. Residues 27–48 traverse the membrane as a helical segment; it reads ALMIIIMILMVVSYMMIAMVFN. The Mitochondrial matrix portion of the chain corresponds to 49-62; sequence KYINRFLLEGQMIE. A helical membrane pass occupies residues 63–82; sequence LAWTIAPAVILIFIAVPSLR. The Mitochondrial intermembrane portion of the chain corresponds to 83-228; that stretch reads LLYLMDEINT…FINWILKMNM (146 aa). Cu cation contacts are provided by His161, Cys196, Glu198, Cys200, His204, and Met207. Residue Glu198 participates in Mg(2+) binding.

Belongs to the cytochrome c oxidase subunit 2 family. As to quaternary structure, component of the cytochrome c oxidase (complex IV, CIV), a multisubunit enzyme composed of a catalytic core of 3 subunits and several supernumerary subunits. The complex exists as a monomer or a dimer and forms supercomplexes (SCs) in the inner mitochondrial membrane with ubiquinol-cytochrome c oxidoreductase (cytochrome b-c1 complex, complex III, CIII). The cofactor is Cu cation.

The protein resides in the mitochondrion inner membrane. The enzyme catalyses 4 Fe(II)-[cytochrome c] + O2 + 8 H(+)(in) = 4 Fe(III)-[cytochrome c] + 2 H2O + 4 H(+)(out). Its function is as follows. Component of the cytochrome c oxidase, the last enzyme in the mitochondrial electron transport chain which drives oxidative phosphorylation. The respiratory chain contains 3 multisubunit complexes succinate dehydrogenase (complex II, CII), ubiquinol-cytochrome c oxidoreductase (cytochrome b-c1 complex, complex III, CIII) and cytochrome c oxidase (complex IV, CIV), that cooperate to transfer electrons derived from NADH and succinate to molecular oxygen, creating an electrochemical gradient over the inner membrane that drives transmembrane transport and the ATP synthase. Cytochrome c oxidase is the component of the respiratory chain that catalyzes the reduction of oxygen to water. Electrons originating from reduced cytochrome c in the intermembrane space (IMS) are transferred via the dinuclear copper A center (CU(A)) of subunit 2 and heme A of subunit 1 to the active site in subunit 1, a binuclear center (BNC) formed by heme A3 and copper B (CU(B)). The BNC reduces molecular oxygen to 2 water molecules using 4 electrons from cytochrome c in the IMS and 4 protons from the mitochondrial matrix. This Periplaneta americana (American cockroach) protein is Cytochrome c oxidase subunit 2 (COII).